Reading from the N-terminus, the 241-residue chain is UDP-2,3-diacylglucosamine hydrolase (241 aa).

5 residues coordinate Mn(2+): aspartate 8, histidine 10, aspartate 41, asparagine 79, and histidine 114. Residue 79–80 (NR) participates in substrate binding. Substrate-binding residues include aspartate 122, serine 160, lysine 167, and histidine 195. 2 residues coordinate Mn(2+): histidine 195 and histidine 197.

It belongs to the LpxH family. Requires Mn(2+) as cofactor.

The protein localises to the cell inner membrane. The catalysed reaction is UDP-2-N,3-O-bis[(3R)-3-hydroxytetradecanoyl]-alpha-D-glucosamine + H2O = 2-N,3-O-bis[(3R)-3-hydroxytetradecanoyl]-alpha-D-glucosaminyl 1-phosphate + UMP + 2 H(+). It functions in the pathway glycolipid biosynthesis; lipid IV(A) biosynthesis; lipid IV(A) from (3R)-3-hydroxytetradecanoyl-[acyl-carrier-protein] and UDP-N-acetyl-alpha-D-glucosamine: step 4/6. Its function is as follows. Hydrolyzes the pyrophosphate bond of UDP-2,3-diacylglucosamine to yield 2,3-diacylglucosamine 1-phosphate (lipid X) and UMP by catalyzing the attack of water at the alpha-P atom. Involved in the biosynthesis of lipid A, a phosphorylated glycolipid that anchors the lipopolysaccharide to the outer membrane of the cell. In Azotobacter vinelandii (strain DJ / ATCC BAA-1303), this protein is UDP-2,3-diacylglucosamine hydrolase.